Here is a 94-residue protein sequence, read N- to C-terminus: Citrate lyase acyl carrier protein (94 aa).

Ser14 carries the O-(phosphoribosyl dephospho-coenzyme A)serine modification.

Belongs to the CitD family. Oligomer with a subunit composition of (alpha,beta,gamma)6.

Its subcellular location is the cytoplasm. Functionally, covalent carrier of the coenzyme of citrate lyase. The sequence is that of Citrate lyase acyl carrier protein from Halothermothrix orenii (strain H 168 / OCM 544 / DSM 9562).